Reading from the N-terminus, the 49-residue chain is uncharacterized protein (49 aa).

It belongs to the ELIP/psbS family.

It localises to the plastid. The protein localises to the cyanelle. Functionally, possible role in chlorophyll and/or carotenoid binding. This is an uncharacterized protein from Cyanophora paradoxa.